A 389-amino-acid chain; its full sequence is Gastricsin (389 aa).

An N-terminal signal peptide occupies residues 1 to 16; it reads MKWMVVVLLCLQLLEA. The propeptide at 17-59 is activation peptide; the sequence is KVVKVPLKKLKSLRETMKEKGLLEEFLKNHKYDPAQKYRYTDF. The Peptidase A1 domain occupies 73-386; that stretch reads YFGEISIGTP…DMGNNRVGFA (314 aa). Residue Asp-91 is part of the active site. 2 disulfides stabilise this stretch: Cys-104–Cys-109 and Cys-268–Cys-272. The active site involves Asp-277. Cys-311 and Cys-344 are disulfide-bonded.

It belongs to the peptidase A1 family.

Its subcellular location is the secreted. It carries out the reaction More restricted specificity than pepsin A, but shows preferential cleavage at Tyr-|-Xaa bonds. High activity on hemoglobin.. Functionally, hydrolyzes a variety of proteins. The chain is Gastricsin (PGC) from Rhinolophus ferrumequinum (Greater horseshoe bat).